A 103-amino-acid polypeptide reads, in one-letter code: uncharacterized protein (103 aa).

This is an uncharacterized protein from Sulfolobus islandicus filamentous virus (isolate Iceland/Hveragerdi) (SIFV).